A 417-amino-acid chain; its full sequence is Serpin A9 (417 aa).

The N-terminal stretch at 1-23 (MASYLYGVLFAVGLCAPIYCVSP) is a signal peptide. N-linked (GlcNAc...) asparagine glycans are attached at residues Asn-101 and Asn-390.

The protein belongs to the serpin family. Highly expressed in normal germinal center (GC) B-cells and GC B-cell-derived malignancies.

The protein resides in the secreted. It is found in the cytoplasm. It localises to the membrane. Protease inhibitor that inhibits trypsin and trypsin-like serine proteases (in vitro). Inhibits plasmin and thrombin with lower efficiency (in vitro). This Homo sapiens (Human) protein is Serpin A9 (SERPINA9).